The chain runs to 659 residues: UDP-glucuronate:xylan alpha-glucuronosyltransferase 1 (659 aa).

Over residues M1 to T14 the composition is skewed to low complexity. The interval M1–R20 is disordered. Residues F70–Y90 traverse the membrane as a helical; Signal-anchor for type II membrane protein segment. Residues D416 and D418 each contribute to the Mn(2+) site. Residues D416 to D418, N445 to G447, N472 to Q476, and H526 to K531 each bind substrate. H526 is a Mn(2+) binding site.

The protein belongs to the glycosyltransferase 8 family. Glycogenin subfamily. Requires Mn(2+) as cofactor.

The protein localises to the golgi apparatus membrane. Functionally, glycosyltransferase required for the addition of both glucuronic acid and 4-O-methylglucuronic acid branches to xylan in stem cell walls. In association with GUX2, is responsible for almost all of the substitutions of the xylan backbone in stem glucuronoxylan. This Arabidopsis thaliana (Mouse-ear cress) protein is UDP-glucuronate:xylan alpha-glucuronosyltransferase 1 (GUX1).